The following is a 213-amino-acid chain: Uridine kinase (213 aa).

15–22 (GGSGSGKT) provides a ligand contact to ATP.

Belongs to the uridine kinase family.

Its subcellular location is the cytoplasm. The catalysed reaction is uridine + ATP = UMP + ADP + H(+). It carries out the reaction cytidine + ATP = CMP + ADP + H(+). Its pathway is pyrimidine metabolism; CTP biosynthesis via salvage pathway; CTP from cytidine: step 1/3. It participates in pyrimidine metabolism; UMP biosynthesis via salvage pathway; UMP from uridine: step 1/1. The polypeptide is Uridine kinase (Ligilactobacillus salivarius (strain UCC118) (Lactobacillus salivarius)).